We begin with the raw amino-acid sequence, 494 residues long: ARS-binding factor 1 (494 aa).

Disordered regions lie at residues 82-130 (NSGS…EDDD) and 273-328 (LTGG…HVDS). Over residues 119 to 130 (RAEDEDDDEDDD) the composition is skewed to acidic residues. Basic residues predominate over residues 281-295 (VQHHHHPSIPAHHQH). The segment covering 319 to 328 (QEQHQSHVDS) has biased composition (basic and acidic residues). Residue Ser400 is modified to Phosphoserine; by PKC. The disordered stretch occupies residues 467-494 (EAEENVSDNNLKKDDIPDENIQPELRGQ).

The protein belongs to the ABF1 family. Extensively phosphorylated on Ser and Thr residues.

Its subcellular location is the nucleus. Its function is as follows. General regulatory factor (GRF) that contributes to transcriptional activation of a large number of genes, as well as to DNA replication, silencing and telomere structure. Involved in the transcription activation of a subset of ribosomal protein genes. Binds the ARS-elements found in many promoters. Binds to the sequence 5'-TCN(7)ACG-3'. In Kluyveromyces lactis (strain ATCC 8585 / CBS 2359 / DSM 70799 / NBRC 1267 / NRRL Y-1140 / WM37) (Yeast), this protein is ARS-binding factor 1 (ABF1).